The sequence spans 666 residues: tRNA 5-methylaminomethyl-2-thiouridine biosynthesis bifunctional protein MnmC (666 aa).

The tract at residues 1-245 is tRNA (mnm(5)s(2)U34)-methyltransferase; that stretch reads MKQYAIQPAT…KREMLCGVME (245 aa). The tract at residues 270 to 666 is FAD-dependent cmnm(5)s(2)U34 oxidoreductase; the sequence is IGGGIASALL…RKLLKGKAVK (397 aa).

In the N-terminal section; belongs to the methyltransferase superfamily. tRNA (mnm(5)s(2)U34)-methyltransferase family. The protein in the C-terminal section; belongs to the DAO family. Requires FAD as cofactor.

It localises to the cytoplasm. The enzyme catalyses 5-aminomethyl-2-thiouridine(34) in tRNA + S-adenosyl-L-methionine = 5-methylaminomethyl-2-thiouridine(34) in tRNA + S-adenosyl-L-homocysteine + H(+). Its function is as follows. Catalyzes the last two steps in the biosynthesis of 5-methylaminomethyl-2-thiouridine (mnm(5)s(2)U) at the wobble position (U34) in tRNA. Catalyzes the FAD-dependent demodification of cmnm(5)s(2)U34 to nm(5)s(2)U34, followed by the transfer of a methyl group from S-adenosyl-L-methionine to nm(5)s(2)U34, to form mnm(5)s(2)U34. This chain is tRNA 5-methylaminomethyl-2-thiouridine biosynthesis bifunctional protein MnmC, found in Salmonella paratyphi B (strain ATCC BAA-1250 / SPB7).